A 436-amino-acid chain; its full sequence is Xylose isomerase (436 aa).

Positions 306 and 308 each coordinate Mg(2+).

The protein belongs to the xylose isomerase family. Homotetramer. It depends on Mg(2+) as a cofactor.

The protein localises to the cytoplasm. It catalyses the reaction alpha-D-xylose = alpha-D-xylulofuranose. The polypeptide is Xylose isomerase (Sinorhizobium fredii (strain NBRC 101917 / NGR234)).